The sequence spans 7639 residues: MAPATCCCCADSASQAMPDMEPTIFPASEIKEEIQTMISSYSSRLGHDFNQDLAKPCNMFCLAWAILLERFTGLDNVCFGFRSEHMVTAGSERTGGVASAMQVQVTADHSVQENLDENAFVSVMIPETKAETLFNTTLSICNLGNQPLCEDEARKIDVLCKLHMSVDPATMKTLLSWDSTFMTREQAETISNTYDKIFRELSSKKRTTVSAIHCCSEQDELKILSWNGSPLNNVQKCIHQAVSWQGAMRPDAEAVCSWDGSFSYAQLLSLSDRLAFHLKKLGVGAETFVPICFDKSKWTIVAMLAILKAGGIFVPLDPTQPLLRLQNLTRKVDADTILCSPQHQEMIESIASKVIPVDAQLFESLAEQRGEVDCGSWSSGAYMIFTSGTTGEPKGALIQHGALLSSALAHGPAMMMDNNTRSLHFAASTFDVSITEILTCLILGGCVCIPSEEARLNAIEEAITQLRVNWALLTPTFVKFINPDNVPSLKTLVTGGEAMTQAVIRSWSHINLINCYGPAETSVVSHVHRGMREGKNPLNIGHQVGIHCWVVDRYNHNRLMPVGAVGELVIESHTLAREYYKEPEKTSEAFIVDPEWALNQPHHSSPRRMYKTGDLVRYNYDSSFHIAGRKDAQIKFHGQRIELGEIEYHINVGINIKHGMVVLPKAGFCEGRLLAIVQLSDASGHDLVPNGRPYQLIDGPLEQVAIAKVEETKQLLTERLPSYMVPSMWLAVEFIPRLQSGKLDRKQTGKWVEDMTEETYRKLNPVAVGDPSESLTFSNGTESQLHNIWTHVLNLKPEQLGLSQSFLSVGGDSISAMQVMSECKKRGLGLTVSHIISCKSISALARHVKEIEKPMLLQETTETPFELSPIQRLYFSRSNHDQGHYNQSFLLRVSRRIDESAMRRAIEVVIRKHSMLRARFSRDDTGRWQQRVTDKVESSYRLRSIQLSSNEELSHALIDSQTCLDYANGPLLAADLLDEEGQDQRLFVVAHHLVIDLVSWRIVLQELEELLLRPELKPDMDRPLPFQTWCQMQREHASAQTPEQALPIHGIPDGDPTYWGMEDTPNIYGQMVHEGFEVGSAQTSLLLSKCHDALRTEIPDVLMAAMVYSFGQTFTDRQTPAIFAEGHGRESWDPSIDLSNVVGWFTTIYPVFADSDATSTLIDTIKMVKDGRRKVPDNGRPYFASRWLTESGEKAFARHWPLEITFNYLGQYQQLEREGALFIPVKGIAGEVSSATDGADVGSLATCISLFEVSAVITKGTLRFSFLFNQNMKHQPKIRQWIASCEQNLSLLVESLAVMSPEPTLSDFPLVSLTYDRLRLLTQEKLPEVGIEDMGRVEDIYPCSPMQSGLLVSTTKDSAAYAAYTLHQVKSRSGGAVDVTKLADAWKRMVDYHPMLRTVFVESVTLDESLFDQVLLKEVKVPLVMSELGTDEEAIKTLDKARHHDEYSQLLHVFEICKTTSGNVFCKLDISHVIMDGTSLSILFRDLSLAYAGILGPDKGPPYSEYIRSLQHQGLQHGIEYWKSYLMGIEPCHFPVLDDGEVVDTRESKCFRVEFDELAQLQRLCDDRGVTIVNAIYAAWALVLRLYTASEEVCFGYLTSARDSQIEGIEDVVGPVINMVTCRANISDSTTLGDTMTVVQNDFLNSLKHRHIPLAQVQHALKLSDVALFNTALSYRKLPPALQDAPDVMFEEVRPTYDPDEYDVSINIEAGENDMMIDLTYWSDTMSDGQATNVASAFTTALSNILHHSDKPVAQLNHLGPRHHQQISQWNNVIPEAVESCVHGLFEEQAILRPEAPAITSWDADFTYAELDTTSTKLAHYLADLGVGLEQFVLVCFDKSAFAIVAMLAVLKAGGVCVPLDPAHPDAAIRLRAEDTGASIAAVSSSMASRLSNIVDKAVVVDSNLLQNISENAILPQINPHNACFVIYTSGSTGRPKGVVLEHRGIATNAKSSGPKLGYSEESRVLQFASYTFDNSLAEIFTTLALGGCVCVPSEHERFNDLAGAISRYRVTLADITPTVACLINPLDVPTLKTLALGGEAVTHKCVDIWRDFVSLQCCYGPSECSVNSTYSGEIAQPGKATNIGRAVGSVTWVVDATDHNRLVPIGCIGELLIDGPIVSRGYLNLPEKMAQSFVAPPASLGDMCREGNLSRKLYKTGDLVRYNSDGTLTYFGRKDTQVKLHGQRIELEEIEHHLEQNLPQDWTSAVELIQFEGKKSLASFICADLGSVRSASNEKNTVLAMDDSFRSLAKELEIALSNNLPAYMIPSVWLPVSEMPMTSSGKLDRRSLRSMVQSLPASEMTSYKLALKSGRAPASDMEKQLASMWAHVLNVDANTIGVEDHFFRLGGDSIAAMQLVTLARKSNINLTVTGVFQKGSLLDMAQSALPLSRTAVATVYAFSLLPEVVSLDALKEEIGSCARIQVGDVEDIYPCTPLQQGLMALSAKEPGAYVAQLVFRLPNGTDLDNFKMAWRLVIEAEGTLRTRLVQTTDHGILNVVVKGDVPQWSTDRSLSDLQRLRSHLPSSNGGRLTDYAIVEDGSDVSFVWTIHHALYDGWCLPLILDRVKQCYEGIQSSTSEPIASGPTYSRFIRYLNETDSSQDVKFWESYLSDISTQHFPRLPDPDYKPSASGLIIHKTCFDNTRDGMKSVGLGITTATMIRSAWALTVSTYAASDDVVFWETMTGRDVPVEGIEEMVGATLSTVPTRIALDRSQKVSDLLSSVQAQSAVVRMHQFAGIHTIKRINTDTAFACGAQNLLAINYGPRTSTDSFWCDQTNEMAGTNFYSYPLMLSCHVADGELETVVHFDPDVICESQMHRVMDQFALMLTAVTSKDLVDEKLSELDLISTRDYQSLSEMNGQMVPSCDMCVHDVIKASGIAQPLDKLAVCAWDQNLTYEGLDSQSTHLSSALIEAGVRPNTFVPFCMEKSSMVVVSILAILKSGAAFVPLDYAHPDARISGIIADVEAEFVLSSPQYAERLTKLGAKVISVSKDTIQDSMPLQQHDLSVSTKSPAYCIFTSGTTGRPKGTIIDHSAFCTGALAHGKAMGMNESSRVLQFASHTFDASIMETLSTLIHGGTVCVPSEEERSQDIAGFIRRMSVNWALLTPSVAQLIEPSTVPELKTLVLGGEAMSRAHLSTWAPSVQLMNAYGPSETSVVATVNSNVTLDSSPANIGRAVGGLCWVVDSANADRLLPIGVVGELFVEGPILSQGYLKNSQKNAESFITNPRWCSKFTSETASSERRFYRTGDLVKITEDGSIEFQGRKDNQVKINGQRLELSEIEHHLNTDAIVQACLAFIPTTGPLKSRLVAVLSLHSTFVSRGPDEMQLVIDFARSELTSVRDSLTGQLASYMIPSMWIVVNRIPLLPSGKLDRRRVANWVEAMSPEQYQLAIGAQDESYASGLDREATETETKLRAAWAKVLGIEVESVPFTRSFIQLGGDSISAMQLVAICRSSNMALSVSQIMQSKSIVKLASFVQAVEDVTQDDEQEDKAFPLSPIQKLYFERMYSDSTHFNQSMVLETTRKITPQDLSNALEAIVKTHSMLRARFSDVDGAYSQRITSDIAGSYAFESHVGMDQCRVSELIEKTQKSLNIFQGPLLAAASIEMEDIDKQIVFLAVHHLVVDVVSWNIILQDLEGLLSSSASNLGKPLSFQTWNTLQLEESRNQTPDRVFHNLPTPAQDLAYWGMQAVPNIHGDAIAETIEIASDVSLQLLGPCHEALNTNVVDVLLASLLSSFHQAFPDRLSMPTIFNEGHGREPADNKLDLSRTVGWFTTLCPVYLPDSLPVQPDILDIICWVRDFRRRIPGNGRPYFAHQMLSESGQKESAEWPAELAFNYLGQRQKTELEGSLFKSPDGVLASVGSETDIGADVPRLALIEISASFSRDDLSFSFSYSRQMKHQPCIREWVKNFSATLQTAVERMTQAKAEPQDLDTSLLPLAFRATSKVDTRLAELGISCCADVEAVYPCSPVQMGILFAQIRNPEFYSYSVTFGVNCIEPSRVVDVQRLKDAWQRVVQRHSTLRTTFVDGLLEEGGINQVVLRNHCADISVFERADNDELQMITERIKPKIMSNKPPHHLSIFSSAEGKVTCVLEMSHALSDGTSMPILFRDLAMAYEGSLDPTIVSAYRDYVSYLQCQGPNDIEYWREYLTGAEPCHLPLASKSTLPRALGYLDQTISCAADLQAFCTGAGVTLSNVIQLAWALVLQAYTGHDDVCFGYLLADRDAPVDNIDNAIGVFINMLVLRVRLGSSQSVGDALGAVQQDLSAAIGHKNISLTDIQRVTGLLNEPLFNTAYSFQRRSISKSMANGSLSFDVREAQDPNEYDLTVNVEVWDQAAELQLCYWTDKISNSQAKTIASTFDKILTSIATCDLSLPTNQLDIVSDDCAQQLTRWNNTEPTLLDQCVHHVFERNVQSLPHDTPAIEAWDARFTYSEVDMLSSRLAHHLVSLGILPEMYVPLCFEKSAWTPIAMLAVLKAGAAFVPIDPTHPPERIEFLVQNTSAKLILCSTSLAEKFDIGVPFLAIDHETMSTLSALPVTSPSIAVQPNNAAYIIFTSGTTGLPKGTIVEHAAFTTGGTAHAAAIKMTCSSRVLQFASYTFDASIMEILTTFLVGGCVCVPSDEERMNDLAGTMAKYDVNWALLTPSVAKVLKPGSVPGLKVLVTGGEAMSTDHITKWLGHAALINAYGPSEASVIAASHTKVDENGVILNEEPANIGHAVGCRTWVVDPHNHNHLMPIGSIGELLLEGPILARGYLKNETKTTDAFIDYPPWRANMSLSGDRVDRMYKTGDLVSQNSDGSLNYVSRKDTQIKLNGQRIELGEIEHHVRANLPAHVQSAVELVVPQSKTSTKTLAAFFTVDDHEVLKETSDPLLPMSSAYMEIGQSLKTALRVALPTHMVPTMYVPLTKMPWTSAGKLDRQKLKTIVQSIAPQDIGGYKLVGASNSRAPTTMMQRKLQKIWAGILNIHPSTISIDDSFFRLGGDSISAMKVVSAARMEEISLTVMDILTSPTLSEMATCCGHSENTTVMEVEPFSLLHDVDSPPSLLDEVADCCDVPTSQIQDLYPCSSLQEGLVAASMQQPGAYVARYIFKVPSTIDMERLKMAWQNTSNHVDILRSRIVNARSLKTYQAILEPHAINWEHYTSLEAIADKTIQLPERNGGVLAKYAIIDSSDPDLRYFVWSVHHALYDAWSMPSLLNLVSQFYHEATTEQLAPPVPYANFARYLVDSDAQASDEFWKATFQNASGVSHFPTATLSDEESTYSSLQHTIQCRRDDLGADITIPTIVRAAWALLLGAHTGSDDVGFGETLSGRDIALEHVEDILGPTLTTVPWRVQIDRSATVGHFLHSLHKKSAEVIPHQHAGLQHIKRLGGSIAVASDFRNLLVIQASDEATDHQDLLQPLEENGNHKNFFTYPLVVECSIELNNLVLTIHHNETVMTSWQVERLAHQFDALVNQLSRLSQEPDRKVAELQFCSEEDLQMIKGWNNGTCDAVYDTIPSLFWQSVATYHDATSIRAWDGHLTYGSLAQHAGHLAKRLIQEGVKAETMVPCCMDKSLWTTVAMLAVVLAGGTIIPMDPAHPRARHAEIARECKAIIALCSPEYRDRFIGVVPTVIAIDQTLFTKQLCQDHIASEDLPLVADKDAAFVIYTSGSTGKAKGVVIEHGSFVASSRAYIKHMNLSATSSVFHFTSYAFDIAMGETFGALTTGACLCVPSEEMRVTDLPGVMNTLGATWAFLTPSLANMQDPSMFKTLQALVCGGEAMTSETVSKWSNKVKLINGYGPAECTVFALSNSNVSEDQDHSNIGRAMDGCQTWIVDTRDHNKLVPVGCEGELLISGPILSRGYLNDSAKTSKSFIENPAWMHHFDDKKHQNPVRLYKTGDLVRYRPDGNLTFIGRKDNQVKLHGQRMELGEIEACLESDPRLRNALVALPKSGVFKGRLVAVLSFKDSDSHNPGLVSSQFSPISESDMDVARLHLPDLQQILSENLPPYMMPSSWLVVEAIPLLLSGKLDRASTQKWLTEMVAETPEFLLDQQLGQDAGATDTTFVGQLLRKIWASVLRIPDESKLSGRSFISLGGDSIMAMQVMSRCRDHSIQLTMRDIMSGKSISDLVTLIEKEGRGKQTVNPEYEEDNSRPFALSPIQQLFFNNSNDKDRGDRFNQSQLFSITESIDKDTFANAIHALVQRHPMLRARFNKSSTTGQWSQQVAPDTEDSYGLHFHEVSDASQIARQIAASQESIGISGPVFIVDLFKMPDGHHHVSMIAHHLVVDVVSWINIAQDLETLLSTSPSMSSKPLSFRKWNAAQTEHATSVAKKNEDLLPFTVRPANLDYWGVSGVSNSYSQVTQQSFSLSDVDTVSLLLGDAHQALRTEPLDLFISALLISFGQCFPDRELPTLFNEGHGREPWDDSIDLSQTVGWFTSLCPIDISHHNADPTYTIDYVRKVKDVRRAIPGNGRPYFAQRYLTDSGKQSLDAHEPMEILLNFLGRSQQSGEDDSILRLSNLSMSDEDMASMSDVGPETRRLALFELSISILDEGIQFTFMYNKNMLHQDLIQQWVITCKEVLGNMAMELSTAPSCPTISDFPLMSLDYAELNKLVTKSLPTAHVRFDEVEDMYPCSPMQMGILISQLLDPSQYLFYAVLEVSASSRSAIDSAKLAQACSEVVERHDALRTVFIESVRSGGSFDQVVLRPGKPRIATFKCREIDVMAKLNTRSLGKTNKRHGVPILPYQITICETPQGKVFIKLEMNHAVTDGASTAIVLRDISSAYANNLHPTKAPSYKEYINYITKQPSDSSLMYWKSYLYGARNTEFPAMNSDHISGRSLGSIAVDFDRFSELQSLGLDAGVTFSNMIMVAWALVLRKYTNSQDVCFGYLGSGRDADIDGVDEIVGPLINMLVFRFQFTHSMLLKRLFLDTQEDYANSLPHQHFSLARVSHELGQSKRGFFNTAVSIQNAGASSDADFSALKFESVDAFDPSEYAVTLNANTTRGDEGIVFRYWTNILSHSQAKELAIVMSEVLSDMIDHSEEALSHLRVSQDSSLPTNPAQDLHGWTFEHSDTSEQFKTTNSTISSYSTGPGATLFSPATSWGSLPRDKDQVYNKLSALWKQHLDVATTDLTYDGSFFEYGGDSIIAMAMVGDARDRDLPLTVADIFKNPSFGTLLNCLRDKSYREGDMVSSDGNISLSGSKKEGIVVDEHTYEPLSLLPQQNAEQFVREHVCPVVGVSRASITDVLPTTDFQAQAIEGSLLDSRWMLNYFHLDGEGPLDVALLQESITNVIASYDVLRTVFVPYEATYLQVILRHVQSELIFHDVDDVEQFTLDLESDHLRQIPSPEKPSLRFILARHEPSERHRLFIRLSHALYDGVCFPAILNALKASYEGEPIATTPSYATYIHGLFSKANPDQHTYWRSLLEGSAPTNLIPRECRSMRTNPTQALRKIVATPSLATVNITTATVIKAAWSVVLAKNTGTRDVVFGHLISGRNSCHVPGIEAIVGPCLNVVPVRVQYQDSWMVLDLLQHIQHQQVDNIPHESLGFREIIRNCTNWDDDGANGFSTVVQHQSMAQTGSLDIGDNTYEVGVIASQEDTADFSVVTTPQDSSNTEVCFLYREGGVERTEFAEKLFDCLCSTIGDLSRDVKTPLVSWL.

Residues 244–636 (WQGAMRPDAE…AGRKDAQIKF (393 aa)) form an adenylation 1 region. Residues 776 to 852 (TFSNGTESQL…ALARHVKEIE (77 aa)) enclose the Carrier 1 domain. Ser-813 is modified (O-(pantetheine 4'-phosphoryl)serine). The interval 865–1295 (FELSPIQRLY…EQNLSLLVES (431 aa)) is epimerization 1. Positions 1337–1767 (VEDIYPCSPM…HLGPRHHQQI (431 aa)) are condensation 1. An adenylation 2 region spans residues 1786 to 2181 (FEEQAILRPE…FGRKDTQVKL (396 aa)). In terms of domain architecture, Carrier 2 spans 2313 to 2389 (APASDMEKQL…DMAQSALPLS (77 aa)). O-(pantetheine 4'-phosphoryl)serine is present on Ser-2350. Positions 2426–2852 (VEDIYPCTPL…LISTRDYQSL (427 aa)) are condensation 2. The segment at 2878–3269 (QPLDKLAVCA…QGRKDNQVKI (392 aa)) is adenylation 3. Residues 3403 to 3479 (REATETETKL…KLASFVQAVE (77 aa)) enclose the Carrier 3 domain. Position 3440 is an O-(pantetheine 4'-phosphoryl)serine (Ser-3440). Positions 3491-3928 (AFPLSPIQKL…RMTQAKAEPQ (438 aa)) are epimerization 2. Residues 3961-4389 (EAVYPCSPVQ…VSDDCAQQLT (429 aa)) are condensation 3. Residues 4407 to 4810 (FERNVQSLPH…VSRKDTQIKL (404 aa)) are adenylation 4. Residues 4944 to 5020 (APTTMMQRKL…EMATCCGHSE (77 aa)) form the Carrier 4 domain. At Ser-4981 the chain carries O-(pantetheine 4'-phosphoryl)serine. Positions 5058 to 5478 (QDLYPCSSLQ…QFCSEEDLQM (421 aa)) are condensation 4. Positions 5498–5900 (FWQSVATYHD…IGRKDNQVKL (403 aa)) are adenylation 5. A Carrier 5 domain is found at 6039–6115 (TDTTFVGQLL…DLVTLIEKEG (77 aa)). Ser-6076 carries the O-(pantetheine 4'-phosphoryl)serine modification. An epimerization 3 region spans residues 6133-6567 (FALSPIQQLF…EVLGNMAMEL (435 aa)). Residues 6607–7032 (VEDMYPCSPM…EALSHLRVSQ (426 aa)) form a condensation 5 region. A Carrier 6 domain is found at 7088 to 7164 (RDKDQVYNKL…TLLNCLRDKS (77 aa)). Ser-7125 carries the post-translational modification O-(pantetheine 4'-phosphoryl)serine. A condensation 6 region spans residues 7254 to 7603 (LDGEGPLDVA…SNTEVCFLYR (350 aa)).

This sequence belongs to the NRP synthetase family.

It catalyses the reaction D-allo-threonine + D-leucine + D-alanine + L-proline + 2 L-leucine + A = fusahexin + AH2 + 6 H2O. It participates in secondary metabolite biosynthesis. In terms of biological role, nonribosomal peptide synthetase; part of the gene cluster that mediates the biosynthesis of the fusahexin, a cyclic hydrophobic hexapeptide with the amino acid sequence cyclo-(D-Ala-L-Leu-D-allo-Thr-L-Pro-D-Leu-L-Leu) that plays an important role in cell surface hydrophobicity. Fusahexin might also play a role in virulence, sensitivity to osmotic stress and oxidative stress. NRPS4 is the only enzyme within the cluster and its 5 catalytic modules are sufficient to produce fusahexin. The modules 1 to 4 incorporate respectively D-alanine, L-leucine, D-allo-threonine, and L-proline, which is supported by the presence of epimerase domains in modules 1 and 3, which incorporate D-amino acids. The terminal module is responsible for incorporation of the two adjacent leucine units, where the epimerase domain is only used to convert the first unit to D-leucine. The terminal condensation domain (Ct) is involved in cyclization with D-alanine and thereby releasing of fusahexin. This Gibberella zeae (strain ATCC MYA-4620 / CBS 123657 / FGSC 9075 / NRRL 31084 / PH-1) (Wheat head blight fungus) protein is Nonribosomal peptide synthetase 4.